The sequence spans 282 residues: S-formylglutathione hydrolase (282 aa).

Alanine 2 is subject to N-acetylalanine. At lysine 4 the chain carries N6-succinyllysine. The active-site Charge relay system is the serine 149. Lysine 200 bears the N6-acetyllysine mark. Catalysis depends on charge relay system residues aspartate 226 and histidine 260.

This sequence belongs to the esterase D family. As to quaternary structure, homodimer.

The protein resides in the cytoplasm. Its subcellular location is the cytoplasmic vesicle. The catalysed reaction is S-formylglutathione + H2O = formate + glutathione + H(+). Functionally, serine hydrolase involved in the detoxification of formaldehyde. This is S-formylglutathione hydrolase (Esd) from Mus musculus (Mouse).